A 668-amino-acid chain; its full sequence is DNA ligase (668 aa).

NAD(+) is bound by residues 37 to 41, 86 to 87, and glutamate 116; these read DNVYD and SM. The N6-AMP-lysine intermediate role is filled by lysine 118. 4 residues coordinate NAD(+): arginine 139, glutamate 173, lysine 288, and lysine 312. Residues cysteine 406, cysteine 409, cysteine 424, and cysteine 429 each contribute to the Zn(2+) site. The BRCT domain maps to 591–668; that stretch reads APDNPFKDKT…TEEEAIAQIE (78 aa).

Belongs to the NAD-dependent DNA ligase family. LigA subfamily. It depends on Mg(2+) as a cofactor. Requires Mn(2+) as cofactor.

It carries out the reaction NAD(+) + (deoxyribonucleotide)n-3'-hydroxyl + 5'-phospho-(deoxyribonucleotide)m = (deoxyribonucleotide)n+m + AMP + beta-nicotinamide D-nucleotide.. DNA ligase that catalyzes the formation of phosphodiester linkages between 5'-phosphoryl and 3'-hydroxyl groups in double-stranded DNA using NAD as a coenzyme and as the energy source for the reaction. It is essential for DNA replication and repair of damaged DNA. This is DNA ligase from Lactobacillus helveticus (strain DPC 4571).